We begin with the raw amino-acid sequence, 285 residues long: MKFIGAHVSASGGVANAPARAAEIGATAFALFTKNQRQWRAAALTPAVIDEFKAACRKHGYGPGQILPHDSFLINLGHPEPEALEKSRAAFIDELARCAQLGLTLLNFHPGSHLQQLSEEACLSRIAESVNIALDKTEGVTAVIENTAGQGSNLGFRFEHLAAIIDQVEDKSRVGVCIDTCHAFAAGYDLRTEEDCEKTFAEFDRIVGFQYLRGMHLNDAKSTFASRVDRHHSLGEGNIGFTPFRWIMQQSHFDNIPLILETINPDIWNEEIAWLKAQQTGGAQA.

The Zn(2+) site is built by His69, His109, Glu145, Asp179, His182, His216, Asp229, His231, and Glu261.

The protein belongs to the AP endonuclease 2 family. Zn(2+) is required as a cofactor.

It catalyses the reaction Endonucleolytic cleavage to 5'-phosphooligonucleotide end-products.. In terms of biological role, endonuclease IV plays a role in DNA repair. It cleaves phosphodiester bonds at apurinic or apyrimidinic (AP) sites, generating a 3'-hydroxyl group and a 5'-terminal sugar phosphate. This is Probable endonuclease 4 from Cronobacter sakazakii (strain ATCC BAA-894) (Enterobacter sakazakii).